A 449-amino-acid chain; its full sequence is MSHIKFDYSKVLDKFVAPHEVEYMQSQVTAADELIRKGTGAGSDFLGWLDLPEKYDREEFDRILKAAEQIKSDSDVLVVIGIGGSYLGAKAAIDFLNHHFANLQTKEERKAPQILYAGNSISSTYLADLVEYVADKDFSVNVISKSGTTTEPAIAFRVFKELLVKKYGQEEANKRIYATTDRQKGAVKVEADANGWGTFVVPDDIGGRFSVLTAVGLLPIAASGADIKALMEGANAARKDYTSDKISENEAYQYAAVRNILYRKGYATEILVNYEPSLQYFSEWWKQLAGESEGKDQKGIYPTSANFSTDLHSLGQFIQEGTRIMFETVVRVDKPRKNVIIPTLEEDLDGLGYLQGKDVDFVNKKATDGVLLAHTDGDVPNMYVTLPEQDAFTLGYTIYFFELAIALSGYLNAINPFDQPGVEAYKRNMFALLGKPGFEELSKELNARL.

Glu-291 (proton donor) is an active-site residue. Residues His-312 and Lys-426 contribute to the active site.

This sequence belongs to the GPI family.

It is found in the cytoplasm. It catalyses the reaction alpha-D-glucose 6-phosphate = beta-D-fructose 6-phosphate. It participates in carbohydrate biosynthesis; gluconeogenesis. It functions in the pathway carbohydrate degradation; glycolysis; D-glyceraldehyde 3-phosphate and glycerone phosphate from D-glucose: step 2/4. In terms of biological role, catalyzes the reversible isomerization of glucose-6-phosphate to fructose-6-phosphate. This is Glucose-6-phosphate isomerase from Streptococcus pneumoniae (strain CGSP14).